We begin with the raw amino-acid sequence, 179 residues long: Pectinesterase inhibitor 5 (179 aa).

Residues 1-25 (MATMLINHMLFLTSLLIVVFPVANA) form the signal peptide. 2 disulfides stabilise this stretch: Cys35–Cys44 and Cys101–Cys141.

Belongs to the PMEI family. As to expression, expressed in seeds, buds, and mature flowers.

The protein localises to the secreted. Its subcellular location is the extracellular space. It localises to the apoplast. Pectin methylesterase (PME) inhibitor that targets PME from seeds and modulates PME activity and pectin methylesterification during seed germination. The protein is Pectinesterase inhibitor 5 of Arabidopsis thaliana (Mouse-ear cress).